Consider the following 480-residue polypeptide: MTQQDGGQAGQAEPTKLWGGRFASGPAEAMAALSLSTHFDWRLAPYDIAGSRAHTRVLHKAGLLTADELERMLAGLDVLAADVESGAFQPVIDDEDVHTALERGLLERVGPELGGKLRAGRSRNDQVATLFRMWLRDAVRRVTSGVLDVVDALTAQAAAHPDAVLPGRTHLQHAQPVLLAHHLLAHCQSLLRDVSRLRDWDARTAFSPYGSGALAGSSLGLDPQAVAAELGFDGGAVDNSIDGTASRDFAAEAAFCLAMLGVNLSRVAEEVIIWNTAEFGYVTLDDAWATGSSIMPQKKNPDVAELARGKSGRLVGNLTGLLATLKAQPLAYNRDLQEDKEPVFDSVEQLDLLLPAMAGMLGTLTFHTERLAELAPAGFTLATDIAEWLVRQGVPFRVAHEASGECVRKAEARGAGLDELTDSELAATHPALTPEVREVLTVGGSIASRDAHGGTAPARVAEQRERVVATVAGHRQWLAG.

The disordered stretch occupies residues 1–20 (MTQQDGGQAGQAEPTKLWGG).

This sequence belongs to the lyase 1 family. Argininosuccinate lyase subfamily.

It localises to the cytoplasm. The enzyme catalyses 2-(N(omega)-L-arginino)succinate = fumarate + L-arginine. The protein operates within amino-acid biosynthesis; L-arginine biosynthesis; L-arginine from L-ornithine and carbamoyl phosphate: step 3/3. The polypeptide is Argininosuccinate lyase (Saccharopolyspora erythraea (strain ATCC 11635 / DSM 40517 / JCM 4748 / NBRC 13426 / NCIMB 8594 / NRRL 2338)).